We begin with the raw amino-acid sequence, 164 residues long: RNA pyrophosphohydrolase (164 aa).

The 146-residue stretch at 8–153 (PYRSNVGAAL…KRPIYERLAR (146 aa)) folds into the Nudix hydrolase domain. Residues 45–66 (GGIDGDEDPAAAVLRELDEEIG) carry the Nudix box motif.

Belongs to the Nudix hydrolase family. RppH subfamily. The cofactor is a divalent metal cation.

Accelerates the degradation of transcripts by removing pyrophosphate from the 5'-end of triphosphorylated RNA, leading to a more labile monophosphorylated state that can stimulate subsequent ribonuclease cleavage. The protein is RNA pyrophosphohydrolase of Acidiphilium cryptum (strain JF-5).